The primary structure comprises 359 residues: Molybdenum import ATP-binding protein ModC (359 aa).

The 233-residue stretch at 1–233 folds into the ABC transporter domain; it reads MSGLTVSIRG…IDAESEGGGV (233 aa). 32–39 is an ATP binding site; that stretch reads GHSGAGKT. The region spanning 289–355 is the Mop domain; the sequence is AISIRNLLPV…VKAVSVDRAA (67 aa).

Belongs to the ABC transporter superfamily. Molybdate importer (TC 3.A.1.8) family. The complex is composed of two ATP-binding proteins (ModC), two transmembrane proteins (ModB) and a solute-binding protein (ModA).

The protein resides in the cell inner membrane. It catalyses the reaction molybdate(out) + ATP + H2O = molybdate(in) + ADP + phosphate + H(+). In terms of biological role, part of the ABC transporter complex ModABC involved in molybdenum import. Responsible for energy coupling to the transport system. The polypeptide is Molybdenum import ATP-binding protein ModC (Brucella suis biovar 1 (strain 1330)).